The primary structure comprises 406 residues: Linalool 8-monooxygenase (406 aa).

Residue C355 coordinates heme.

The protein belongs to the cytochrome P450 family. Heme serves as cofactor.

It catalyses the reaction linalool + 2 reduced [NADPH--hemoprotein reductase] + 2 O2 = (6E)-8-oxolinalool + 2 oxidized [NADPH--hemoprotein reductase] + 3 H2O + 2 H(+). The protein operates within terpene metabolism; linalool degradation. Its function is as follows. Catalyzes the 8-methyl hydroxylation of linalool. This is Linalool 8-monooxygenase (linC) from Pseudomonas putida (Arthrobacter siderocapsulatus).